The chain runs to 229 residues: Large ribosomal subunit protein uL1 (229 aa).

This sequence belongs to the universal ribosomal protein uL1 family. As to quaternary structure, part of the 50S ribosomal subunit.

Its function is as follows. Binds directly to 23S rRNA. The L1 stalk is quite mobile in the ribosome, and is involved in E site tRNA release. In terms of biological role, protein L1 is also a translational repressor protein, it controls the translation of the L11 operon by binding to its mRNA. This chain is Large ribosomal subunit protein uL1, found in Enterococcus faecalis (strain ATCC 700802 / V583).